The chain runs to 535 residues: CTP synthase (535 aa).

The amidoligase domain stretch occupies residues 1–267 (MTKFIFVTGG…DDIVIQRLQL (267 aa)). Ser-13 lines the CTP pocket. Ser-13 contacts UTP. 14–19 (SLGKGI) is an ATP binding site. Tyr-54 contributes to the L-glutamine binding site. Asp-71 provides a ligand contact to ATP. Residues Asp-71 and Glu-141 each contribute to the Mg(2+) site. CTP is bound by residues 148–150 (DIE), 188–193 (KTKPTQ), and Lys-224. UTP-binding positions include 188–193 (KTKPTQ) and Lys-224. Residue 240-242 (RDA) participates in ATP binding. The region spanning 293–535 (TIGLVGKYVS…VEAALNYQQK (243 aa)) is the Glutamine amidotransferase type-1 domain. Position 355 (Gly-355) interacts with L-glutamine. Cys-382 (nucleophile; for glutamine hydrolysis) is an active-site residue. L-glutamine is bound by residues 383–386 (LGMQ), Glu-406, and Arg-463. Residues His-508 and Glu-510 contribute to the active site.

Belongs to the CTP synthase family. Homotetramer.

The enzyme catalyses UTP + L-glutamine + ATP + H2O = CTP + L-glutamate + ADP + phosphate + 2 H(+). The catalysed reaction is L-glutamine + H2O = L-glutamate + NH4(+). It carries out the reaction UTP + NH4(+) + ATP = CTP + ADP + phosphate + 2 H(+). It functions in the pathway pyrimidine metabolism; CTP biosynthesis via de novo pathway; CTP from UDP: step 2/2. With respect to regulation, allosterically activated by GTP, when glutamine is the substrate; GTP has no effect on the reaction when ammonia is the substrate. The allosteric effector GTP functions by stabilizing the protein conformation that binds the tetrahedral intermediate(s) formed during glutamine hydrolysis. Inhibited by the product CTP, via allosteric rather than competitive inhibition. In terms of biological role, catalyzes the ATP-dependent amination of UTP to CTP with either L-glutamine or ammonia as the source of nitrogen. Regulates intracellular CTP levels through interactions with the four ribonucleotide triphosphates. This chain is CTP synthase, found in Staphylococcus epidermidis (strain ATCC 35984 / DSM 28319 / BCRC 17069 / CCUG 31568 / BM 3577 / RP62A).